Reading from the N-terminus, the 466-residue chain is Soluble pyridine nucleotide transhydrogenase (466 aa).

36-45 (ERYHQVGGGC) is an FAD binding site.

The protein belongs to the class-I pyridine nucleotide-disulfide oxidoreductase family. The cofactor is FAD.

It localises to the cytoplasm. It catalyses the reaction NAD(+) + NADPH = NADH + NADP(+). In terms of biological role, conversion of NADPH, generated by peripheral catabolic pathways, to NADH, which can enter the respiratory chain for energy generation. The polypeptide is Soluble pyridine nucleotide transhydrogenase (Colwellia psychrerythraea (strain 34H / ATCC BAA-681) (Vibrio psychroerythus)).